The primary structure comprises 185 residues: Large ribosomal subunit protein uL5 (185 aa).

The protein belongs to the universal ribosomal protein uL5 family. Part of the 50S ribosomal subunit; contacts the 5S rRNA and probably tRNA. Forms a bridge to the 30S subunit in the 70S ribosome.

Functionally, this is one of the proteins that bind and probably mediate the attachment of the 5S RNA into the large ribosomal subunit, where it forms part of the central protuberance. In the 70S ribosome it contacts protein S13 of the 30S subunit (bridge B1b), connecting the 2 subunits; this bridge is implicated in subunit movement. May contact the P site tRNA; the 5S rRNA and some of its associated proteins might help stabilize positioning of ribosome-bound tRNAs. This is Large ribosomal subunit protein uL5 from Haloquadratum walsbyi (strain DSM 16790 / HBSQ001).